Reading from the N-terminus, the 256-residue chain is F-actin-capping protein subunit alpha (256 aa).

Serine 31 is modified (phosphoserine).

This sequence belongs to the F-actin-capping protein alpha subunit family. In terms of assembly, component of the F-actin capping complex, composed of a heterodimer of an alpha and a beta subunit.

The protein resides in the cytoplasm. Its subcellular location is the cytoskeleton. It is found in the actin patch. Functionally, F-actin-capping proteins bind in a Ca(2+)-independent manner to the fast growing ends of actin filaments (barbed end) thereby blocking the exchange of subunits at these ends. Unlike other capping proteins (such as gelsolin and severin), these proteins do not sever actin filaments. Competes with formin cdc12 for attachment to the actin filaments barbed ends. Slowly replaces cdc12 on the barbed ends in preparation for filament disassembly during contractile ring constriction. This chain is F-actin-capping protein subunit alpha (acp1), found in Schizosaccharomyces pombe (strain 972 / ATCC 24843) (Fission yeast).